The sequence spans 325 residues: Iodotyrosine dehalogenase 1 homolog (325 aa).

The helical transmembrane segment at 42–62 (VLNVLFTLGVILFVIYQVASL) threads the bilayer. Topologically, residues 63-325 (LHRMNKRVEK…KPVEHITKLY (263 aa)) are cytoplasmic. FMN contacts are provided by residues 135–139 (RRSCR), 163–164 (SV), 273–275 (VTS), and Arg315.

The protein belongs to the nitroreductase family. FMN serves as cofactor. Expressed in body-wall, anal depressor and vulval muscles.

It is found in the membrane. Functionally, may contribute to coordination of muscle contraction as regulatory subunit of the nonessential sup-9 potassium channel complex. May act downstream of sup-10. This chain is Iodotyrosine dehalogenase 1 homolog, found in Caenorhabditis elegans.